Here is an 828-residue protein sequence, read N- to C-terminus: DNA gyrase subunit A (828 aa).

The Topo IIA-type catalytic domain maps to 32-497 (LPDVRDGLKP…EVLSLEDEDL (466 aa)). The active-site O-(5'-phospho-DNA)-tyrosine intermediate is the Tyr-120. The GyrA-box signature appears at 524–530 (QKRGGRG).

The protein belongs to the type II topoisomerase GyrA/ParC subunit family. As to quaternary structure, heterotetramer, composed of two GyrA and two GyrB chains. In the heterotetramer, GyrA contains the active site tyrosine that forms a transient covalent intermediate with DNA, while GyrB binds cofactors and catalyzes ATP hydrolysis.

The protein localises to the cytoplasm. The enzyme catalyses ATP-dependent breakage, passage and rejoining of double-stranded DNA.. A type II topoisomerase that negatively supercoils closed circular double-stranded (ds) DNA in an ATP-dependent manner to modulate DNA topology and maintain chromosomes in an underwound state. Negative supercoiling favors strand separation, and DNA replication, transcription, recombination and repair, all of which involve strand separation. Also able to catalyze the interconversion of other topological isomers of dsDNA rings, including catenanes and knotted rings. Type II topoisomerases break and join 2 DNA strands simultaneously in an ATP-dependent manner. This chain is DNA gyrase subunit A, found in Streptococcus pyogenes serotype M3 (strain ATCC BAA-595 / MGAS315).